A 110-amino-acid polypeptide reads, in one-letter code: HTH-type transcriptional regulator TnrA (110 aa).

The HTH merR-type domain occupies 13-81 (VISIGIVSEL…TAEILKDMRK (69 aa)). The segment at residues 16–35 (IGIVSELTGLSVRQIRYYEE) is a DNA-binding region (H-T-H motif).

As to quaternary structure, homodimer. Under conditions of nitrogen excess, TnrA forms a stable complex with feedback-inhibited GlnA. Interacts with GlnK-AmtB complex.

It localises to the cell membrane. With respect to regulation, under conditions of nitrogen excess, the DNA-binding activity is inhibited by the formation of a stable complex with feedback-inhibited GlnA. The presence of glutamine and AMP increases the inhibitory activity of glutamine synthetase by more than 1000-fold. In terms of biological role, transcription regulator that actives the transcription of genes required for nitrogen assimilation such as nrgAB (ammonium transport), nasABCDEF (nitrate/nitrite assimilation), ureABC (urea degradation) and gabP (GABA transport), during nitrogen limitation. Also represses glnRA and gltAB in the absence of ammonium. On the contrary of the MerR members, which require longer DNA sites for high-affinity binding, TnrA requires a DNA sequence of 17 nucleotides as minimal binding site. This chain is HTH-type transcriptional regulator TnrA, found in Bacillus subtilis (strain 168).